The primary structure comprises 180 residues: Oligoribonuclease (180 aa).

Residues 7–168 (LVWIDLEMTG…QDIRDSIDEL (162 aa)) form the Exonuclease domain. The active site involves Tyr-128.

It belongs to the oligoribonuclease family.

The protein resides in the cytoplasm. Functionally, 3'-to-5' exoribonuclease specific for small oligoribonucleotides. In Dichelobacter nodosus (strain VCS1703A), this protein is Oligoribonuclease.